The following is a 156-amino-acid chain: Transcription elongation factor GreA (156 aa).

Positions 46–66 (AEYHSAREKQSFIEGRIKELE) form a coiled coil.

It belongs to the GreA/GreB family.

Necessary for efficient RNA polymerase transcription elongation past template-encoded arresting sites. The arresting sites in DNA have the property of trapping a certain fraction of elongating RNA polymerases that pass through, resulting in locked ternary complexes. Cleavage of the nascent transcript by cleavage factors such as GreA or GreB allows the resumption of elongation from the new 3'terminus. GreA releases sequences of 2 to 3 nucleotides. In Ruegeria pomeroyi (strain ATCC 700808 / DSM 15171 / DSS-3) (Silicibacter pomeroyi), this protein is Transcription elongation factor GreA.